A 123-amino-acid chain; its full sequence is Large ribosomal subunit protein bL17 (123 aa).

Belongs to the bacterial ribosomal protein bL17 family. As to quaternary structure, part of the 50S ribosomal subunit. Contacts protein L32.

The protein is Large ribosomal subunit protein bL17 of Dichelobacter nodosus (strain VCS1703A).